The following is a 363-amino-acid chain: UDP-N-acetylglucosamine--N-acetylmuramyl-(pentapeptide) pyrophosphoryl-undecaprenol N-acetylglucosamine transferase (363 aa).

UDP-N-acetyl-alpha-D-glucosamine contacts are provided by residues T21–G23, N129, R170, S196, and Q290.

The protein belongs to the glycosyltransferase 28 family. MurG subfamily.

The protein localises to the cell inner membrane. It carries out the reaction di-trans,octa-cis-undecaprenyl diphospho-N-acetyl-alpha-D-muramoyl-L-alanyl-D-glutamyl-meso-2,6-diaminopimeloyl-D-alanyl-D-alanine + UDP-N-acetyl-alpha-D-glucosamine = di-trans,octa-cis-undecaprenyl diphospho-[N-acetyl-alpha-D-glucosaminyl-(1-&gt;4)]-N-acetyl-alpha-D-muramoyl-L-alanyl-D-glutamyl-meso-2,6-diaminopimeloyl-D-alanyl-D-alanine + UDP + H(+). The protein operates within cell wall biogenesis; peptidoglycan biosynthesis. In terms of biological role, cell wall formation. Catalyzes the transfer of a GlcNAc subunit on undecaprenyl-pyrophosphoryl-MurNAc-pentapeptide (lipid intermediate I) to form undecaprenyl-pyrophosphoryl-MurNAc-(pentapeptide)GlcNAc (lipid intermediate II). The sequence is that of UDP-N-acetylglucosamine--N-acetylmuramyl-(pentapeptide) pyrophosphoryl-undecaprenol N-acetylglucosamine transferase from Synechococcus sp. (strain ATCC 27144 / PCC 6301 / SAUG 1402/1) (Anacystis nidulans).